Here is a 302-residue protein sequence, read N- to C-terminus: Ribosomal RNA small subunit methyltransferase H (302 aa).

Residues 34 to 36 (AGH), aspartate 53, phenylalanine 80, aspartate 101, and glutamine 108 each bind S-adenosyl-L-methionine. Residues 283 to 302 (LEENPRSKSAKMRVLKKIER) are disordered. Over residues 290 to 302 (KSAKMRVLKKIER) the composition is skewed to basic residues.

This sequence belongs to the methyltransferase superfamily. RsmH family.

It localises to the cytoplasm. It catalyses the reaction cytidine(1402) in 16S rRNA + S-adenosyl-L-methionine = N(4)-methylcytidine(1402) in 16S rRNA + S-adenosyl-L-homocysteine + H(+). Specifically methylates the N4 position of cytidine in position 1402 (C1402) of 16S rRNA. The sequence is that of Ribosomal RNA small subunit methyltransferase H from Mycoplasma mobile (strain ATCC 43663 / 163K / NCTC 11711) (Mesomycoplasma mobile).